Here is a 552-residue protein sequence, read N- to C-terminus: Arginine--tRNA ligase (552 aa).

Positions glycine 124 to histidine 134 match the 'HIGH' region motif.

The protein belongs to the class-I aminoacyl-tRNA synthetase family. In terms of assembly, monomer.

Its subcellular location is the cytoplasm. It carries out the reaction tRNA(Arg) + L-arginine + ATP = L-arginyl-tRNA(Arg) + AMP + diphosphate. This Tropheryma whipplei (strain Twist) (Whipple's bacillus) protein is Arginine--tRNA ligase.